The following is a 189-amino-acid chain: Protein GrpE (189 aa).

Residues 1-21 (MADEQNLDNQNPETPEQSQAD) form a disordered region. Over residues 7–20 (LDNQNPETPEQSQA) the composition is skewed to polar residues.

Belongs to the GrpE family. Homodimer.

The protein localises to the cytoplasm. In terms of biological role, participates actively in the response to hyperosmotic and heat shock by preventing the aggregation of stress-denatured proteins, in association with DnaK and GrpE. It is the nucleotide exchange factor for DnaK and may function as a thermosensor. Unfolded proteins bind initially to DnaJ; upon interaction with the DnaJ-bound protein, DnaK hydrolyzes its bound ATP, resulting in the formation of a stable complex. GrpE releases ADP from DnaK; ATP binding to DnaK triggers the release of the substrate protein, thus completing the reaction cycle. Several rounds of ATP-dependent interactions between DnaJ, DnaK and GrpE are required for fully efficient folding. This Stutzerimonas stutzeri (strain A1501) (Pseudomonas stutzeri) protein is Protein GrpE.